A 388-amino-acid polypeptide reads, in one-letter code: Succinate--CoA ligase [ADP-forming] subunit beta (388 aa).

The ATP-grasp domain maps to lysine 9–histidine 244. ATP-binding positions include lysine 46, glycine 53–glycine 55, glutamate 99, serine 102, and glutamate 107. Mg(2+)-binding residues include asparagine 199 and aspartate 213. Substrate is bound by residues asparagine 264 and glycine 321 to valine 323.

Belongs to the succinate/malate CoA ligase beta subunit family. As to quaternary structure, heterotetramer of two alpha and two beta subunits. The cofactor is Mg(2+).

The catalysed reaction is succinate + ATP + CoA = succinyl-CoA + ADP + phosphate. It carries out the reaction GTP + succinate + CoA = succinyl-CoA + GDP + phosphate. It participates in carbohydrate metabolism; tricarboxylic acid cycle; succinate from succinyl-CoA (ligase route): step 1/1. Succinyl-CoA synthetase functions in the citric acid cycle (TCA), coupling the hydrolysis of succinyl-CoA to the synthesis of either ATP or GTP and thus represents the only step of substrate-level phosphorylation in the TCA. The beta subunit provides nucleotide specificity of the enzyme and binds the substrate succinate, while the binding sites for coenzyme A and phosphate are found in the alpha subunit. The sequence is that of Succinate--CoA ligase [ADP-forming] subunit beta from Vibrio vulnificus (strain YJ016).